A 157-amino-acid chain; its full sequence is Phosphomannomutase (157 aa).

Serine 98 (phosphoserine intermediate) is an active-site residue. Residue serine 98 coordinates Mg(2+).

It belongs to the phosphohexose mutase family. Mg(2+) serves as cofactor.

It catalyses the reaction alpha-D-mannose 1-phosphate = D-mannose 6-phosphate. It functions in the pathway nucleotide-sugar biosynthesis; GDP-alpha-D-mannose biosynthesis; alpha-D-mannose 1-phosphate from D-fructose 6-phosphate: step 2/2. Its pathway is capsule biogenesis; capsule polysaccharide biosynthesis. Functionally, involved in the biosynthesis of the K2 capsular polysaccharide biosynthesis. The chain is Phosphomannomutase (manB) from Klebsiella pneumoniae.